The chain runs to 53 residues: uncharacterized protein (53 aa).

Its subcellular location is the mitochondrion. This is an uncharacterized protein from Saccharomyces cerevisiae (strain ATCC 204508 / S288c) (Baker's yeast).